The primary structure comprises 232 residues: Phosphatidylserine decarboxylase proenzyme (232 aa).

Ser190 serves as the catalytic Schiff-base intermediate with substrate; via pyruvic acid. At Ser190 the chain carries Pyruvic acid (Ser); by autocatalysis.

It belongs to the phosphatidylserine decarboxylase family. PSD-A subfamily. In terms of assembly, heterodimer of a large membrane-associated beta subunit and a small pyruvoyl-containing alpha subunit. It depends on pyruvate as a cofactor. Post-translationally, is synthesized initially as an inactive proenzyme. Formation of the active enzyme involves a self-maturation process in which the active site pyruvoyl group is generated from an internal serine residue via an autocatalytic post-translational modification. Two non-identical subunits are generated from the proenzyme in this reaction, and the pyruvate is formed at the N-terminus of the alpha chain, which is derived from the carboxyl end of the proenzyme. The post-translation cleavage follows an unusual pathway, termed non-hydrolytic serinolysis, in which the side chain hydroxyl group of the serine supplies its oxygen atom to form the C-terminus of the beta chain, while the remainder of the serine residue undergoes an oxidative deamination to produce ammonia and the pyruvoyl prosthetic group on the alpha chain.

The protein resides in the cell membrane. It carries out the reaction a 1,2-diacyl-sn-glycero-3-phospho-L-serine + H(+) = a 1,2-diacyl-sn-glycero-3-phosphoethanolamine + CO2. The protein operates within phospholipid metabolism; phosphatidylethanolamine biosynthesis; phosphatidylethanolamine from CDP-diacylglycerol: step 2/2. Catalyzes the formation of phosphatidylethanolamine (PtdEtn) from phosphatidylserine (PtdSer). This chain is Phosphatidylserine decarboxylase proenzyme, found in Rhodopseudomonas palustris (strain BisB18).